A 375-amino-acid chain; its full sequence is Methylthioribose-1-phosphate isomerase (375 aa).

The Proton donor role is filled by Asp259.

Belongs to the eIF-2B alpha/beta/delta subunits family. MtnA subfamily.

Its subcellular location is the cytoplasm. It localises to the nucleus. The enzyme catalyses 5-(methylsulfanyl)-alpha-D-ribose 1-phosphate = 5-(methylsulfanyl)-D-ribulose 1-phosphate. It participates in amino-acid biosynthesis; L-methionine biosynthesis via salvage pathway; L-methionine from S-methyl-5-thio-alpha-D-ribose 1-phosphate: step 1/6. Functionally, catalyzes the interconversion of methylthioribose-1-phosphate (MTR-1-P) into methylthioribulose-1-phosphate (MTRu-1-P). The protein is Methylthioribose-1-phosphate isomerase of Populus trichocarpa (Western balsam poplar).